The following is a 30-amino-acid chain: Photosystem I reaction center subunit XII (30 aa).

A helical transmembrane segment spans residues 7–29 (VYIALMAALLASVLAIRLGATLY).

Belongs to the PsaM family.

Its subcellular location is the plastid. It localises to the chloroplast thylakoid membrane. In Thalassiosira pseudonana (Marine diatom), this protein is Photosystem I reaction center subunit XII.